The following is a 61-amino-acid chain: Small ribosomal subunit protein uS14 (61 aa).

Zn(2+) contacts are provided by C24, C27, C40, and C43.

It belongs to the universal ribosomal protein uS14 family. Zinc-binding uS14 subfamily. Part of the 30S ribosomal subunit. Contacts proteins S3 and S10. The cofactor is Zn(2+).

Its function is as follows. Binds 16S rRNA, required for the assembly of 30S particles and may also be responsible for determining the conformation of the 16S rRNA at the A site. In Caldicellulosiruptor bescii (strain ATCC BAA-1888 / DSM 6725 / KCTC 15123 / Z-1320) (Anaerocellum thermophilum), this protein is Small ribosomal subunit protein uS14.